Reading from the N-terminus, the 217-residue chain is Ras-related protein RABA1g (217 aa).

20–27 (GDSGVGKS) lines the GTP pocket. The Effector region signature appears at 42–50 (SKSTIGVEF). Residues 68 to 72 (DTAGQ), 126 to 129 (NKAD), and 156 to 157 (SA) contribute to the GTP site. S-geranylgeranyl cysteine attachment occurs at residues Cys-214 and Cys-215.

The protein belongs to the small GTPase superfamily. Rab family.

It is found in the cell membrane. Its function is as follows. Intracellular vesicle trafficking and protein transport. This chain is Ras-related protein RABA1g (RABA1G), found in Arabidopsis thaliana (Mouse-ear cress).